The primary structure comprises 123 residues: MNAGICVCVLLAALSTSSCLSLPAVSEDGGQSDLGIVMEHTRHTRAAPSSGQLSLLSKAEDDEEPRSSLTELLARIISTKGTYRRSPSPKSKSMGNNHRIKDRDYLGWMDFGRRSAEEYEYSS.

Positions 1-19 (MNAGICVCVLLAALSTSSC) are cleaved as a signal peptide. Positions 20–103 (LSLPAVSEDG…MGNNHRIKDR (84 aa)) are excised as a propeptide. A disordered region spans residues 43–67 (HTRAAPSSGQLSLLSKAEDDEEPRS). Tyrosine 105 is subject to Sulfotyrosine. Phenylalanine amide is present on phenylalanine 111. The propeptide occupies 115–123 (SAEEYEYSS). Sulfotyrosine occurs at positions 119 and 121.

It belongs to the gastrin/cholecystokinin family. The precursor is cleaved by proteases to produce a number of active cholecystokinins. As to expression, expressed in the ovary, kidney, gill, gastrointestinal tract and pituitary. Differentially expressed in the brain in the optic tectum-thalamus, hypothalamus, telencephalon, olfactory bulb and tract, preoptic region and posterior brain region. Expression is strongest in the hypothalamus, where localization is to the posterior ventrolateral region. Expression in the brain is transiently increased 2 hours after feeding. Abundant in the sensory layers of the vagal lobe and along the border of the sensory region of the lobe and the deep fiber laye. Also present in the facial lobe and throughout the glossopharyngeal lobe.

The protein resides in the secreted. In terms of biological role, this peptide hormone induces gall bladder contraction and the release of pancreatic enzymes in the gut. Induces the secretion of gonadotropin and growth hormone from the pituitary. Suppresses food intake and decreases the expression of preprosomatostatin genes in the forebrain. The sequence is that of Cholecystokinin (cck) from Carassius auratus (Goldfish).